We begin with the raw amino-acid sequence, 390 residues long: Glucose-fructose oxidoreductase domain-containing protein 1 (390 aa).

Residues 1–21 (MLPGVGVFGTSLTSRVIIPLL) form the signal peptide. N-linked (GlcNAc...) asparagine glycosylation is found at asparagine 161, asparagine 270, and asparagine 354.

It belongs to the Gfo/Idh/MocA family. In terms of assembly, homodimer.

The protein localises to the secreted. In terms of biological role, probably catalytically inactive enzyme. Does not bind NAD or NADP. This chain is Glucose-fructose oxidoreductase domain-containing protein 1 (gfod1), found in Xenopus tropicalis (Western clawed frog).